We begin with the raw amino-acid sequence, 1024 residues long: Beta-galactosidase (1024 aa).

Substrate is bound by residues N103 and D202. Residue D202 coordinates Na(+). Residues E417, H419, and E462 each contribute to the Mg(2+) site. Substrate contacts are provided by residues E462 and 538–541 (EYAH). E462 (proton donor) is an active-site residue. E538 functions as the Nucleophile in the catalytic mechanism. Residue N598 coordinates Mg(2+). Na(+) contacts are provided by F602 and N605. 2 residues coordinate substrate: N605 and W1000.

This sequence belongs to the glycosyl hydrolase 2 family. As to quaternary structure, homotetramer. Mg(2+) is required as a cofactor. Requires Na(+) as cofactor.

The enzyme catalyses Hydrolysis of terminal non-reducing beta-D-galactose residues in beta-D-galactosides.. The polypeptide is Beta-galactosidase (Shigella dysenteriae serotype 1 (strain Sd197)).